The following is a 438-amino-acid chain: Glutamate-1-semialdehyde 2,1-aminomutase (438 aa).

Position 277 is an N6-(pyridoxal phosphate)lysine (K277).

This sequence belongs to the class-III pyridoxal-phosphate-dependent aminotransferase family. HemL subfamily. In terms of assembly, homodimer. Pyridoxal 5'-phosphate is required as a cofactor.

The protein resides in the cytoplasm. The enzyme catalyses (S)-4-amino-5-oxopentanoate = 5-aminolevulinate. It participates in porphyrin-containing compound metabolism; protoporphyrin-IX biosynthesis; 5-aminolevulinate from L-glutamyl-tRNA(Glu): step 2/2. It functions in the pathway porphyrin-containing compound metabolism; chlorophyll biosynthesis. The sequence is that of Glutamate-1-semialdehyde 2,1-aminomutase from Synechococcus sp. (strain CC9311).